A 427-amino-acid chain; its full sequence is Forkhead box protein A1-B (427 aa).

A DNA-binding region (fork-head) is located at residues 157–251; it reads KPPYSYISLI…ENGCYLRRQK (95 aa). A compositionally biased stretch (basic and acidic residues) spans 256-272; the sequence is EKTQGGKGNQDGRKDHS. Residues 256-336 are disordered; it reads EKTQGGKGNQ…HQNHSTHSLA (81 aa). The segment covering 285-302 has biased composition (low complexity); the sequence is SSQMDSSSSMSNPSSSPQ. The span at 323-334 shows a compositional bias: polar residues; that stretch reads PLSSHQNHSTHS.

Present in the vegetal pole and marginal zone but not the animal pole of gastrulae and in equal levels in the dorsal and ventral halves of both gastrulae and neurulae. At neurula stage, expressed in the notochord. During tailbud stages, expressed in the foregut, brain, hypocord, neural floor plate and in two lines of cells just dorsal and ventral to the notochord. Expressed in the adult liver.

The protein resides in the nucleus. Functionally, probable transcription factor. The protein is Forkhead box protein A1-B (foxa1-b) of Xenopus laevis (African clawed frog).